The following is a 161-amino-acid chain: Epididymal protein 13 (161 aa).

A signal peptide spans 1–23; sequence MHRSEPFLKMSLLILLFLGLAEA. A glycan (N-linked (GlcNAc...) asparagine) is linked at N56.

It localises to the secreted. This chain is Epididymal protein 13, found in Homo sapiens (Human).